Here is a 213-residue protein sequence, read N- to C-terminus: Methylthioribulose-1-phosphate dehydratase (213 aa).

Zn(2+) is bound by residues H97 and H99.

It belongs to the aldolase class II family. MtnB subfamily. In terms of assembly, homotetramer. Requires Zn(2+) as cofactor.

The enzyme catalyses 5-(methylsulfanyl)-D-ribulose 1-phosphate = 5-methylsulfanyl-2,3-dioxopentyl phosphate + H2O. Its pathway is amino-acid biosynthesis; L-methionine biosynthesis via salvage pathway; L-methionine from S-methyl-5-thio-alpha-D-ribose 1-phosphate: step 2/6. In terms of biological role, catalyzes the dehydration of methylthioribulose-1-phosphate (MTRu-1-P) into 2,3-diketo-5-methylthiopentyl-1-phosphate (DK-MTP-1-P). The polypeptide is Methylthioribulose-1-phosphate dehydratase (Geobacillus sp. (strain WCH70)).